A 580-amino-acid polypeptide reads, in one-letter code: Proline--tRNA ligase (580 aa).

The protein belongs to the class-II aminoacyl-tRNA synthetase family. ProS type 1 subfamily. In terms of assembly, homodimer.

The protein resides in the cytoplasm. The catalysed reaction is tRNA(Pro) + L-proline + ATP = L-prolyl-tRNA(Pro) + AMP + diphosphate. Catalyzes the attachment of proline to tRNA(Pro) in a two-step reaction: proline is first activated by ATP to form Pro-AMP and then transferred to the acceptor end of tRNA(Pro). As ProRS can inadvertently accommodate and process non-cognate amino acids such as alanine and cysteine, to avoid such errors it has two additional distinct editing activities against alanine. One activity is designated as 'pretransfer' editing and involves the tRNA(Pro)-independent hydrolysis of activated Ala-AMP. The other activity is designated 'posttransfer' editing and involves deacylation of mischarged Ala-tRNA(Pro). The misacylated Cys-tRNA(Pro) is not edited by ProRS. This is Proline--tRNA ligase from Mycobacteroides abscessus (strain ATCC 19977 / DSM 44196 / CCUG 20993 / CIP 104536 / JCM 13569 / NCTC 13031 / TMC 1543 / L948) (Mycobacterium abscessus).